The primary structure comprises 616 residues: Protein NRT1/ PTR FAMILY 2.11 (616 aa).

Positions 1 to 22 are disordered; it reads MERKPLELESTDNHQNPSSAVY. Helical transmembrane passes span 59–79, 87–107, 118–138, 159–179, 205–225, 233–253, 349–369, 392–412, 435–455, 483–503, 519–539, and 566–586; these read FEKL…TAVF, ATII…AAFL, LSVA…TAAV, GGQI…AGGI, FFNW…TLVV, WTIG…IFFA, VKCI…YLTI, FVIP…VFIV, LQRI…AGFV, AMWL…AAIG, FAGS…SFLI, and LFYF…LVMS.

It belongs to the major facilitator superfamily. Proton-dependent oligopeptide transporter (POT/PTR) (TC 2.A.17) family. Expressed in roots. Detected in shoots, stems and flowers. Expressed in veins and in the root vasculature with highest expression in lateral branching points.

The protein localises to the cell membrane. Its function is as follows. High-affinity, proton-dependent glucosinolate-specific transporter. Involved in apoplasmic phloem-loading of glucosinolates and in bidirectional long-distance transport of aliphatic but not indole glucosinolates. May be involved in removal of glucosinolates from the xylem in roots. The chain is Protein NRT1/ PTR FAMILY 2.11 (NPF2.11) from Arabidopsis thaliana (Mouse-ear cress).